We begin with the raw amino-acid sequence, 523 residues long: Xanthotoxin 5-hydroxylase CYP82C2 (523 aa).

Residues M1–F21 form a helical membrane-spanning segment. C462 contacts heme.

Belongs to the cytochrome P450 family. The cofactor is heme.

The protein resides in the membrane. The enzyme catalyses xanthotoxin + reduced [NADPH--hemoprotein reductase] + O2 = 5-hydroxyxanthotoxin + oxidized [NADPH--hemoprotein reductase] + H2O + 2 H(+). The catalysed reaction is indole-3-carbonyl nitrile + reduced [NADPH--hemoprotein reductase] + O2 = 4-hydroxy-indole-3-carbonyl nitrile + oxidized [NADPH--hemoprotein reductase] + H2O + H(+). In terms of biological role, involved in the biosynthetic pathway to 4-hydroxyindole-3-carbonyl nitrile (4-OH-ICN), a cyanogenic metabolite required for inducible pathogen defense. Converts indole-3-carbonyl nitrile (ICN) into 4-OH-ICN. Can hydroxylate xanthotoxin (8-methoxypsoralen) to form 5-hydroxyxanthotoxin (5-hydroxy-8-methoxypsoralen) in vivo and in vitro. In Arabidopsis thaliana (Mouse-ear cress), this protein is Xanthotoxin 5-hydroxylase CYP82C2.